A 1166-amino-acid chain; its full sequence is DNA-directed RNA polymerase subunit beta (1166 aa).

Belongs to the RNA polymerase beta chain family. In terms of assembly, the RNAP catalytic core consists of 2 alpha, 1 beta, 1 beta' and 1 omega subunit. When a sigma factor is associated with the core the holoenzyme is formed, which can initiate transcription.

It carries out the reaction RNA(n) + a ribonucleoside 5'-triphosphate = RNA(n+1) + diphosphate. Functionally, DNA-dependent RNA polymerase catalyzes the transcription of DNA into RNA using the four ribonucleoside triphosphates as substrates. The chain is DNA-directed RNA polymerase subunit beta from Nocardioides sp. (strain ATCC BAA-499 / JS614).